Consider the following 56-residue polypeptide: Prokaryotic ubiquitin-like protein UBact (56 aa).

The interval 1–56 (MPDQAQKTRPVGPGPSGGGEGPGSPKVEKPNTEELLKRMRKVDPDQAKRYRQRTGQ) is disordered. The span at 26-48 (KVEKPNTEELLKRMRKVDPDQAK) shows a compositional bias: basic and acidic residues. Gln56 bears the Deamidated glutamine mark. Residue Gln56 forms an Isoglutamyl lysine isopeptide (Gln-Lys) (interchain with K-? in acceptor proteins) linkage.

It belongs to the ubiquitin-like protein UBact family. Post-translationally, may be modified by deamidation of its C-terminal glutamine to glutamate by the adjacently encoded deamidase. This could be a prerequisite to the subsequent conjugation, as shown in the other prokaryotic ubiquitin-like protein Pup.

Its function is as follows. May function as a protein modifier covalently attached to lysine residues of substrate proteins. This may serve to target the modified proteins for degradation by proteasomes. This is Prokaryotic ubiquitin-like protein UBact from Pedosphaera parvula (strain Ellin514).